The sequence spans 224 residues: dTTP/UTP pyrophosphatase (224 aa).

Residue Asp77 is the Proton acceptor of the active site.

It belongs to the Maf family. YhdE subfamily. A divalent metal cation is required as a cofactor.

It localises to the cytoplasm. The catalysed reaction is dTTP + H2O = dTMP + diphosphate + H(+). It carries out the reaction UTP + H2O = UMP + diphosphate + H(+). In terms of biological role, nucleoside triphosphate pyrophosphatase that hydrolyzes dTTP and UTP. May have a dual role in cell division arrest and in preventing the incorporation of modified nucleotides into cellular nucleic acids. This chain is dTTP/UTP pyrophosphatase, found in Dehalococcoides mccartyi (strain ATCC BAA-2266 / KCTC 15142 / 195) (Dehalococcoides ethenogenes (strain 195)).